A 519-amino-acid polypeptide reads, in one-letter code: DNA damage-binding protein CMR1 (519 aa).

The tract at residues 35–92 (AEAGLGPTGKSRAAASSKPRVKKPAPKKIKQEDIAPRRTSSRLKGIEADSEKAKRKAE) is disordered. The segment covering 53 to 62 (PRVKKPAPKK) has biased composition (basic residues). The span at 78–92 (KGIEADSEKAKRKAE) shows a compositional bias: basic and acidic residues. 6 WD repeats span residues 240–280 (PHTR…AVEV), 287–327 (NEDQ…DQAE), 331–371 (LSEK…GKGD), 380–420 (EHES…EWAT), 442–485 (GRWV…LAQL), and 488–519 (DGIT…CLWM).

It belongs to the WD repeat DDB2/WDR76 family.

In terms of biological role, DNA-binding protein that binds to both single- and double-stranded DNA. Binds preferentially to UV-damaged DNA. May be involved in DNA-metabolic processes. This chain is DNA damage-binding protein CMR1, found in Phaeosphaeria nodorum (strain SN15 / ATCC MYA-4574 / FGSC 10173) (Glume blotch fungus).